Consider the following 414-residue polypeptide: Serine hydroxymethyltransferase (414 aa).

(6S)-5,6,7,8-tetrahydrofolate contacts are provided by residues Leu121 and 125 to 127; that span reads GHL. N6-(pyridoxal phosphate)lysine is present on Lys229.

The protein belongs to the SHMT family. As to quaternary structure, homodimer. It depends on pyridoxal 5'-phosphate as a cofactor.

It localises to the cytoplasm. It carries out the reaction (6R)-5,10-methylene-5,6,7,8-tetrahydrofolate + glycine + H2O = (6S)-5,6,7,8-tetrahydrofolate + L-serine. The protein operates within one-carbon metabolism; tetrahydrofolate interconversion. It functions in the pathway amino-acid biosynthesis; glycine biosynthesis; glycine from L-serine: step 1/1. Its function is as follows. Catalyzes the reversible interconversion of serine and glycine with tetrahydrofolate (THF) serving as the one-carbon carrier. This reaction serves as the major source of one-carbon groups required for the biosynthesis of purines, thymidylate, methionine, and other important biomolecules. Also exhibits THF-independent aldolase activity toward beta-hydroxyamino acids, producing glycine and aldehydes, via a retro-aldol mechanism. This Acidovorax ebreus (strain TPSY) (Diaphorobacter sp. (strain TPSY)) protein is Serine hydroxymethyltransferase.